A 210-amino-acid polypeptide reads, in one-letter code: Ras-related protein Rab-8 (210 aa).

Position 15–22 (15–22 (GDSGVGKT)) interacts with GTP. The Effector region motif lies at 37–45 (FISTIGIDF). GTP-binding positions include 63-67 (DTAGQ) and 121-124 (NKCD). A Cysteine methyl ester modification is found at C207. C207 carries the S-geranylgeranyl cysteine lipid modification. The propeptide at 208–210 (SLL) is removed in mature form.

Belongs to the small GTPase superfamily. Rab family.

It localises to the cell membrane. This is Ras-related protein Rab-8 from Diplobatis ommata (Ocellated electric ray).